A 209-amino-acid polypeptide reads, in one-letter code: Pyridoxine/pyridoxamine 5'-phosphate oxidase (209 aa).

Substrate is bound by residues 7-10 and Lys-64; that span reads RADY. Residues 59–64, 74–75, and Lys-81 each bind FMN; these read RIVLLK and FT. Tyr-121, Arg-125, and Ser-129 together coordinate substrate. FMN-binding positions include 138–139, Trp-182, and Arg-192; that span reads QS.

Belongs to the pyridoxamine 5'-phosphate oxidase family. Homodimer. It depends on FMN as a cofactor.

The enzyme catalyses pyridoxamine 5'-phosphate + O2 + H2O = pyridoxal 5'-phosphate + H2O2 + NH4(+). The catalysed reaction is pyridoxine 5'-phosphate + O2 = pyridoxal 5'-phosphate + H2O2. The protein operates within cofactor metabolism; pyridoxal 5'-phosphate salvage; pyridoxal 5'-phosphate from pyridoxamine 5'-phosphate: step 1/1. It functions in the pathway cofactor metabolism; pyridoxal 5'-phosphate salvage; pyridoxal 5'-phosphate from pyridoxine 5'-phosphate: step 1/1. Its function is as follows. Catalyzes the oxidation of either pyridoxine 5'-phosphate (PNP) or pyridoxamine 5'-phosphate (PMP) into pyridoxal 5'-phosphate (PLP). The protein is Pyridoxine/pyridoxamine 5'-phosphate oxidase of Haemophilus ducreyi (strain 35000HP / ATCC 700724).